The following is a 793-amino-acid chain: Kinesin-associated protein 3 (793 aa).

Phosphoserine is present on S60. Residues 103–119 (LPGKEKKEKSSKPKDPP) show a composition bias toward basic and acidic residues. The interval 103–123 (LPGKEKKEKSSKPKDPPPFEG) is disordered. ARM repeat units follow at residues 333-373 (FMEN…NLSF), 374-412 (DTGL…HISM), 494-533 (DGPT…NLTI), 578-620 (DDSC…QMVF), and 621-662 (HQAT…IIAE).

Interacts with SMC3 subunit of the cohesin complex. Heterotrimer of KIFAP3, KIF3A and KIF3B. Interacts with RAP1GDS1/SMG GDS. Post-translationally, phosphorylated on tyrosine residues by SRC in vitro; this reduces the binding affinity of the protein for RAP1GDS1.

Its function is as follows. Involved in tethering the chromosomes to the spindle pole and in chromosome movement. Binds to the tail domain of the KIF3A/KIF3B heterodimer to form a heterotrimeric KIF3 complex and may regulate the membrane binding of this complex. The protein is Kinesin-associated protein 3 (Kifap3) of Mus musculus (Mouse).